The following is a 158-amino-acid chain: NAD(P)H-quinone oxidoreductase subunit J, chloroplastic (158 aa).

The protein belongs to the complex I 30 kDa subunit family. NDH is composed of at least 16 different subunits, 5 of which are encoded in the nucleus.

It is found in the plastid. The protein localises to the chloroplast thylakoid membrane. The catalysed reaction is a plastoquinone + NADH + (n+1) H(+)(in) = a plastoquinol + NAD(+) + n H(+)(out). The enzyme catalyses a plastoquinone + NADPH + (n+1) H(+)(in) = a plastoquinol + NADP(+) + n H(+)(out). In terms of biological role, NDH shuttles electrons from NAD(P)H:plastoquinone, via FMN and iron-sulfur (Fe-S) centers, to quinones in the photosynthetic chain and possibly in a chloroplast respiratory chain. The immediate electron acceptor for the enzyme in this species is believed to be plastoquinone. Couples the redox reaction to proton translocation, and thus conserves the redox energy in a proton gradient. This is NAD(P)H-quinone oxidoreductase subunit J, chloroplastic from Lactuca sativa (Garden lettuce).